The primary structure comprises 69 residues: Large ribosomal subunit protein uL29 (69 aa).

The protein belongs to the universal ribosomal protein uL29 family.

This Thermoanaerobacter pseudethanolicus (strain ATCC 33223 / 39E) (Clostridium thermohydrosulfuricum) protein is Large ribosomal subunit protein uL29.